We begin with the raw amino-acid sequence, 160 residues long: Photosystem I reaction center subunit XI (160 aa).

The next 2 helical transmembrane spans lie at 84–104 (LIPALAMVLLATGCLASYGLV) and 125–145 (FAAGFFIGGMGGAFVAYFLLE).

This sequence belongs to the PsaL family.

Its subcellular location is the cellular thylakoid membrane. The polypeptide is Photosystem I reaction center subunit XI (Microcystis aeruginosa (strain NIES-843 / IAM M-2473)).